A 53-amino-acid polypeptide reads, in one-letter code: UPF0391 membrane protein Bxeno_A1464 (53 aa).

2 helical membrane passes run 5–25 (AAIF…GIAA) and 30–50 (IAKV…LMGV).

This sequence belongs to the UPF0391 family.

The protein localises to the cell membrane. The sequence is that of UPF0391 membrane protein Bxeno_A1464 from Paraburkholderia xenovorans (strain LB400).